We begin with the raw amino-acid sequence, 40 residues long: Dolichyl-diphosphooligosaccharide--protein glycosyltransferase subunit 4 (40 aa).

At 1–4 (MISD) the chain is on the lumenal side. The chain crosses the membrane as a helical span at residues 5 to 25 (VQLAIFSNVLGVFLFLLVVAY). The Cytoplasmic segment spans residues 26 to 40 (HYINANTGKPSAKAK).

Belongs to the OST4 family. As to quaternary structure, component of the oligosaccharyltransferase (OST) complex.

The protein resides in the endoplasmic reticulum membrane. Functionally, subunit of the oligosaccharyl transferase (OST) complex that catalyzes the initial transfer of a defined glycan (Glc(3)Man(9)GlcNAc(2) in eukaryotes) from the lipid carrier dolichol-pyrophosphate to an asparagine residue within an Asn-X-Ser/Thr consensus motif in nascent polypeptide chains, the first step in protein N-glycosylation. N-glycosylation occurs cotranslationally and the complex associates with the Sec61 complex at the channel-forming translocon complex that mediates protein translocation across the endoplasmic reticulum (ER). All subunits are required for a maximal enzyme activity. This is Dolichyl-diphosphooligosaccharide--protein glycosyltransferase subunit 4 from Drosophila yakuba (Fruit fly).